A 286-amino-acid chain; its full sequence is Bifunctional protein FolD (286 aa).

Residues 166–168 (GAS) and isoleucine 232 each bind NADP(+).

The protein belongs to the tetrahydrofolate dehydrogenase/cyclohydrolase family. As to quaternary structure, homodimer.

The enzyme catalyses (6R)-5,10-methylene-5,6,7,8-tetrahydrofolate + NADP(+) = (6R)-5,10-methenyltetrahydrofolate + NADPH. The catalysed reaction is (6R)-5,10-methenyltetrahydrofolate + H2O = (6R)-10-formyltetrahydrofolate + H(+). The protein operates within one-carbon metabolism; tetrahydrofolate interconversion. In terms of biological role, catalyzes the oxidation of 5,10-methylenetetrahydrofolate to 5,10-methenyltetrahydrofolate and then the hydrolysis of 5,10-methenyltetrahydrofolate to 10-formyltetrahydrofolate. This Shewanella piezotolerans (strain WP3 / JCM 13877) protein is Bifunctional protein FolD.